A 309-amino-acid polypeptide reads, in one-letter code: Tagatose-6-phosphate kinase (309 aa).

The protein belongs to the carbohydrate kinase PfkB family. LacC subfamily.

It catalyses the reaction D-tagatofuranose 6-phosphate + ATP = D-tagatofuranose 1,6-bisphosphate + ADP + H(+). The protein operates within carbohydrate metabolism; D-tagatose 6-phosphate degradation; D-glyceraldehyde 3-phosphate and glycerone phosphate from D-tagatose 6-phosphate: step 1/2. The chain is Tagatose-6-phosphate kinase from Streptococcus pneumoniae (strain 70585).